The sequence spans 337 residues: Peptide methionine sulfoxide reductase MsrA/MsrB (337 aa).

The segment at 28–181 (KDIYLAGGCF…PGGYCHVDLS (154 aa)) is peptide methionine sulfoxide reductase A. The active site involves C36. The MsrB domain occupies 198-321 (KDELKAKLSD…NGASLKFIPL (124 aa)). C310 functions as the Nucleophile in the catalytic mechanism.

This sequence in the N-terminal section; belongs to the MsrA Met sulfoxide reductase family. It in the C-terminal section; belongs to the MsrB Met sulfoxide reductase family.

It catalyses the reaction L-methionyl-[protein] + [thioredoxin]-disulfide + H2O = L-methionyl-(S)-S-oxide-[protein] + [thioredoxin]-dithiol. It carries out the reaction [thioredoxin]-disulfide + L-methionine + H2O = L-methionine (S)-S-oxide + [thioredoxin]-dithiol. The catalysed reaction is L-methionyl-[protein] + [thioredoxin]-disulfide + H2O = L-methionyl-(R)-S-oxide-[protein] + [thioredoxin]-dithiol. Its function is as follows. Has an important function as a repair enzyme for proteins that have been inactivated by oxidation. Catalyzes the reversible oxidation-reduction of methionine sulfoxide in proteins to methionine. In Campylobacter fetus, this protein is Peptide methionine sulfoxide reductase MsrA/MsrB (msrAB).